The following is a 298-amino-acid chain: Rhodomycin D methylesterase DauP (298 aa).

Residues 25 to 277 enclose the AB hydrolase-1 domain; the sequence is PLLLIAGGNL…VEIENMGHAL (253 aa).

It belongs to the methyl esterase DnrP family.

The enzyme catalyses rhodomycin D + H2O = 10-carboxy-13-deoxycarminomycin + methanol + H(+). It carries out the reaction 4-O-methylrhodomycin D + H2O = 10-carboxy-13-deoxydaunorubicin + methanol + H(+). It participates in antibiotic biosynthesis; daunorubicin biosynthesis. Its pathway is antibiotic biosynthesis; carminomycin biosynthesis. In terms of biological role, involved in the biosynthesis of the anthracyclines carminomycin and daunorubicin (daunomycin) which are aromatic polyketide antibiotics that exhibit high cytotoxicity and are widely applied in the chemotherapy of a variety of cancers. Catalyzes the removal of methyl group from the carbomethoxy group of rhodomycin D (10-carbomethoxy-13-deoxycarminomycin) and 4-O-methylrhodomycin D to yield 10-carboxy-13-deoxycarminomycin and 10-carboxy-13-deoxydaunorubicin, respectively. Could be also involved in the decarboxylation of 10-carboxy-13-deoxycarminomycin and 10-carboxy-13-deoxydaunorubicin to yield 13-deoxycarminomycin and 13-deoxydaunorubicin, respectively. It seems that DauK may influence the ability of DauP to carry out the decarboxylation. In Streptomyces sp. (strain C5), this protein is Rhodomycin D methylesterase DauP (dauP).